A 345-amino-acid polypeptide reads, in one-letter code: Phosphoribosylformylglycinamidine cyclo-ligase (345 aa).

This sequence belongs to the AIR synthase family.

The protein localises to the cytoplasm. The catalysed reaction is 2-formamido-N(1)-(5-O-phospho-beta-D-ribosyl)acetamidine + ATP = 5-amino-1-(5-phospho-beta-D-ribosyl)imidazole + ADP + phosphate + H(+). It functions in the pathway purine metabolism; IMP biosynthesis via de novo pathway; 5-amino-1-(5-phospho-D-ribosyl)imidazole from N(2)-formyl-N(1)-(5-phospho-D-ribosyl)glycinamide: step 2/2. The protein is Phosphoribosylformylglycinamidine cyclo-ligase of Bifidobacterium longum subsp. infantis (strain ATCC 15697 / DSM 20088 / JCM 1222 / NCTC 11817 / S12).